A 150-amino-acid polypeptide reads, in one-letter code: Cell division protein SepF (150 aa).

It belongs to the SepF family. Homodimer. Interacts with FtsZ.

The protein localises to the cytoplasm. In terms of biological role, cell division protein that is part of the divisome complex and is recruited early to the Z-ring. Probably stimulates Z-ring formation, perhaps through the cross-linking of FtsZ protofilaments. Its function overlaps with FtsA. In Clostridium botulinum (strain Kyoto / Type A2), this protein is Cell division protein SepF.